The following is a 151-amino-acid chain: Probable ubiquitin-conjugating enzyme E2 W-B (151 aa).

In terms of domain architecture, UBC core spans 3 to 151; it reads SMQKRLQKEL…TKWWYHDDTC (149 aa). Catalysis depends on C91, which acts as the Glycyl thioester intermediate.

This sequence belongs to the ubiquitin-conjugating enzyme family.

Its subcellular location is the nucleus. It catalyses the reaction S-ubiquitinyl-[E1 ubiquitin-activating enzyme]-L-cysteine + [E2 ubiquitin-conjugating enzyme]-L-cysteine = [E1 ubiquitin-activating enzyme]-L-cysteine + S-ubiquitinyl-[E2 ubiquitin-conjugating enzyme]-L-cysteine.. It carries out the reaction S-ubiquitinyl-[E1 ubiquitin-activating enzyme]-L-cysteine + [acceptor protein]-N-terminal-amino acid = [E1 ubiquitin-activating enzyme]-L-cysteine + N-terminal-ubiquitinyl-[acceptor protein].. The protein operates within protein modification; protein ubiquitination. In terms of biological role, accepts ubiquitin from the E1 complex and catalyzes its covalent attachment to other proteins. Catalyzes monoubiquitination. Involved in degradation of misfolded chaperone substrate and DNA repair. In Danio rerio (Zebrafish), this protein is Probable ubiquitin-conjugating enzyme E2 W-B (ube2wb).